The chain runs to 410 residues: 45 kDa immediate-early protein 2 (410 aa).

The interval 36–166 (SEEEQGEEVE…SKRISELDNE (131 aa)) is disordered. 3 stretches are compositionally biased toward low complexity: residues 47-67 (RGAT…TSPT), 90-101 (SSSSSSCSSASD), and 132-147 (AASS…SSGG). The segment at 257-283 (VRCRLGTMCNLALSTPFLMEHTMPVTH) is a zinc-finger region.

Functionally, activates the E1.7 promoter. This activation is augmented by the IE1 protein. It down-regulates the transcription of genes under the control of the major IE promoter. The chain is 45 kDa immediate-early protein 2 (UL122) from Homo sapiens (Human).